The following is a 338-amino-acid chain: Large ribosomal subunit protein uL10 (338 aa).

A compositionally biased stretch (low complexity) spans 298–308; that stretch reads AAQQTQTQQST. The interval 298–338 is disordered; the sequence is AAQQTQTQQSTAEEKKEEKKEEEKKGPSEEEIGSGLASLFG. Residues 309 to 325 are compositionally biased toward basic and acidic residues; the sequence is AEEKKEEKKEEEKKGPS.

This sequence belongs to the universal ribosomal protein uL10 family. As to quaternary structure, part of the 50S ribosomal subunit. Forms part of the ribosomal stalk which helps the ribosome interact with GTP-bound translation factors. Forms a heptameric L10(L12)2(L12)2(L12)2 complex, where L10 forms an elongated spine to which the L12 dimers bind in a sequential fashion.

Its function is as follows. Forms part of the ribosomal stalk, playing a central role in the interaction of the ribosome with GTP-bound translation factors. The chain is Large ribosomal subunit protein uL10 from Saccharolobus islandicus (strain M.16.27) (Sulfolobus islandicus).